The following is a 436-amino-acid chain: Transcriptional regulator STP3 (436 aa).

The tract at residues E204–Q277 is disordered. The span at I230–S265 shows a compositional bias: low complexity. The segment covering T268 to Q277 has biased composition (basic residues). The segment at F315–H337 adopts a C2H2-type zinc-finger fold.

Post-translationally, activated by the amino acid-induced proteolytic removal of an N-terminal inhibitory domain.

It is found in the cell membrane. The protein resides in the nucleus. In terms of biological role, transcription factor that activates genes required for degradation of extracellular protein and uptake of peptides such as the secreted aspartyl protease SAP2 or the oligopeptide transporter OPT1. Required for virulence. Synthesized as latent cytoplasmic precursor, which, upon a signal initiated by the plasma membrane SPS amino acid sensor system (including CSY1 and CSH3), becomes proteolytically activated and relocates to the nucleus, where it induces the expression of SPS-sensor-regulated genes. The protein is Transcriptional regulator STP3 (STP3) of Candida albicans (strain SC5314 / ATCC MYA-2876) (Yeast).